We begin with the raw amino-acid sequence, 465 residues long: 3-isopropylmalate dehydratase large subunit (465 aa).

Cys347, Cys407, and Cys410 together coordinate [4Fe-4S] cluster.

This sequence belongs to the aconitase/IPM isomerase family. LeuC type 1 subfamily. In terms of assembly, heterodimer of LeuC and LeuD. The cofactor is [4Fe-4S] cluster.

It catalyses the reaction (2R,3S)-3-isopropylmalate = (2S)-2-isopropylmalate. The protein operates within amino-acid biosynthesis; L-leucine biosynthesis; L-leucine from 3-methyl-2-oxobutanoate: step 2/4. Catalyzes the isomerization between 2-isopropylmalate and 3-isopropylmalate, via the formation of 2-isopropylmaleate. This chain is 3-isopropylmalate dehydratase large subunit, found in Aeromonas hydrophila subsp. hydrophila (strain ATCC 7966 / DSM 30187 / BCRC 13018 / CCUG 14551 / JCM 1027 / KCTC 2358 / NCIMB 9240 / NCTC 8049).